The following is a 78-amino-acid chain: Acyl carrier protein (78 aa).

Positions 2–77 (SDTVERVKKI…DAVKFIDKAS (76 aa)) constitute a Carrier domain. Serine 37 is modified (O-(pantetheine 4'-phosphoryl)serine).

This sequence belongs to the acyl carrier protein (ACP) family. Post-translationally, 4'-phosphopantetheine is transferred from CoA to a specific serine of apo-ACP by AcpS. This modification is essential for activity because fatty acids are bound in thioester linkage to the sulfhydryl of the prosthetic group.

It localises to the cytoplasm. The protein operates within lipid metabolism; fatty acid biosynthesis. Carrier of the growing fatty acid chain in fatty acid biosynthesis. The polypeptide is Acyl carrier protein (Bartonella quintana (strain Toulouse) (Rochalimaea quintana)).